The sequence spans 203 residues: LexA repressor (203 aa).

Residues 30–50 constitute a DNA-binding region (H-T-H motif); sequence VREICQAVSLKSTSTVHGHLK. Residues Ser-127 and Lys-164 each act as for autocatalytic cleavage activity in the active site.

The protein belongs to the peptidase S24 family. Homodimer.

The catalysed reaction is Hydrolysis of Ala-|-Gly bond in repressor LexA.. Represses a number of genes involved in the response to DNA damage (SOS response), including recA and lexA. In the presence of single-stranded DNA, RecA interacts with LexA causing an autocatalytic cleavage which disrupts the DNA-binding part of LexA, leading to derepression of the SOS regulon and eventually DNA repair. This Clostridium perfringens (strain 13 / Type A) protein is LexA repressor.